The primary structure comprises 140 residues: Beta/delta-urticatoxin-De2a (140 aa).

The first 18 residues, 1–18 (MKTSTALVLLLALTATSA), serve as a signal peptide directing secretion. A propeptide spanning residues 19–78 (SSGDHQFIDEQNIMNVAEGKNVISSLSSSGGGDDAAAIMESVLVNGGNRKMVFMMVSGSQ) is cleaved from the precursor. 6 disulfides stabilise this stretch: cysteine 81–cysteine 95, cysteine 88–cysteine 100, cysteine 94–cysteine 108, cysteine 113–cysteine 127, cysteine 120–cysteine 131, and cysteine 126–cysteine 139.

This sequence belongs to the urticatoxin-2 family. Expressed in trichomes, that are stiff epidermal hairs located on the surface of petioles and leaves.

Its subcellular location is the secreted. Plant defense neurotoxin that causes pain and systemic symptoms in mammals via modulation of voltage-gated sodium channels (Nav). Potent modulator of human Nav1.5/SCN5A (EC(50)=55 nM), Nav1.6/SCN8A (EC(50)=0.86 nM), and Nav1.7/SCN9A (EC(50)=208 nM), where it shifts the activation threshold to more negative potentials and delays fast inactivation. Also shifts the voltage-dependence of steady-state fast inactivation of Nav1.6/SCN8A, but not that of Nav1.5/SCN5A or Nav1.7/SCN9A. On Nav1.7/SCN9A, principally acts by binding to extracellular loops of domain IV (Nav site 3). In vivo, intraplantar injection into mice causes numerous dose-dependent, immediate, and long-lasting spontaneous pain behaviors, while no swelling is observed in the injected paw. At the highest doses tested, systemic symptoms including hypokinesia and hypersalivation are observed. The protein is Beta/delta-urticatoxin-De2a of Dendrocnide excelsa (Giant stinging tree).